Consider the following 450-residue polypeptide: Crh-like protein 4 (450 aa).

The first 21 residues, 1–21, serve as a signal peptide directing secretion; the sequence is MRLSLVGVAIGLLSSSAIVTA. Residues cysteine 27 and cysteine 34 are joined by a disulfide bond. In terms of domain architecture, GH16 spans 46 to 228; that stretch reads YDFTKGSSPD…WAGGETDYSA (183 aa). Residue glutamate 119 is the Nucleophile of the active site. Residue glutamate 123 is the Proton donor of the active site. Residues glutamate 123, lysine 201, tryptophan 205, and threonine 216 each coordinate chitin. N-linked (GlcNAc...) asparagine glycosylation occurs at asparagine 383.

This sequence belongs to the glycosyl hydrolase 16 family. CRH1 subfamily. Post-translationally, the GPI-like anchor contains a phosphoceramide lipid group. The anchor position has not been determined.

It is found in the cell membrane. It localises to the secreted. The protein localises to the cell wall. It carries out the reaction Random endo-hydrolysis of N-acetyl-beta-D-glucosaminide (1-&gt;4)-beta-linkages in chitin and chitodextrins.. In terms of biological role, dual chitinase/transglycosylase that plays a role in cell wall architecture. Chitinase and transglycosylase activities are coupled. Required for the polysaccharide cross-linking at the septa and the cell wall. More specifically, transfers chitin to 1,6-beta-glucan in the cell wall. The protein is Crh-like protein 4 of Aspergillus fumigatus (strain ATCC MYA-4609 / CBS 101355 / FGSC A1100 / Af293) (Neosartorya fumigata).